The following is a 475-amino-acid chain: 3-keto-steroid reductase ERG27 (475 aa).

NADP(+)-binding residues include isoleucine 32, isoleucine 55, threonine 59, and lysine 65. Catalysis depends on proton donor residues serine 249 and tyrosine 272. NADP(+)-binding residues include tyrosine 272, lysine 276, valine 324, and serine 326. Catalysis depends on lysine 276, which acts as the Lowers pKa of active site Tyr.

This sequence belongs to the short-chain dehydrogenases/reductases (SDR) family. ERG27 subfamily. As to quaternary structure, heterotetramer of ERG25, ERG26, ERG27 and ERG28. ERG28 acts as a scaffold to tether ERG27 and other 4,4-demethylation-related enzymes, forming a demethylation enzyme complex, in the endoplasmic reticulum.

The protein resides in the endoplasmic reticulum membrane. The protein localises to the lipid droplet. Its pathway is steroid metabolism; ergosterol biosynthesis. 3-keto-steroid reductase; part of the third module of ergosterol biosynthesis pathway that includes the late steps of the pathway. ERG27 is a catalytic component of the C-4 demethylation complex that catalyzes the conversion of 4,4-dimethylfecosterol into fecosterol via 4-methylfecosterol. The third module or late pathway involves the ergosterol synthesis itself through consecutive reactions that mainly occur in the endoplasmic reticulum (ER) membrane. Firstly, the squalene synthase ERG9 catalyzes the condensation of 2 farnesyl pyrophosphate moieties to form squalene, which is the precursor of all steroids. Squalene synthase is crucial for balancing the incorporation of farnesyl diphosphate (FPP) into sterol and nonsterol isoprene synthesis. Secondly, squalene is converted into lanosterol by the consecutive action of the squalene epoxidase ERG1 and the lanosterol synthase ERG7. Then, the delta(24)-sterol C-methyltransferase ERG6 methylates lanosterol at C-24 to produce eburicol. Eburicol is the substrate of the sterol 14-alpha demethylase encoded by CYP51A, CYP51B and CYP51C, to yield 4,4,24-trimethyl ergosta-8,14,24(28)-trienol. CYP51B encodes the enzyme primarily responsible for sterol 14-alpha-demethylation, and plays an essential role in ascospore formation. CYP51A encodes an additional sterol 14-alpha-demethylase, induced on ergosterol depletion and responsible for the intrinsic variation in azole sensitivity. The third CYP51 isoform, CYP51C, does not encode a sterol 14-alpha-demethylase, but is required for full virulence on host wheat ears. The C-14 reductase ERG24 then reduces the C14=C15 double bond which leads to 4,4-dimethylfecosterol. A sequence of further demethylations at C-4, involving the C-4 demethylation complex containing the C-4 methylsterol oxidases ERG25, the sterol-4-alpha-carboxylate 3-dehydrogenase ERG26 and the 3-keto-steroid reductase ERG27, leads to the production of fecosterol via 4-methylfecosterol. ERG28 has a role as a scaffold to help anchor ERG25, ERG26 and ERG27 to the endoplasmic reticulum. The C-8 sterol isomerase ERG2 then catalyzes the reaction which results in unsaturation at C-7 in the B ring of sterols and thus converts fecosterol to episterol. The sterol-C5-desaturases ERG3A and ERG3BB then catalyze the introduction of a C-5 double bond in the B ring to produce 5-dehydroepisterol. The C-22 sterol desaturases ERG5A and ERG5B further convert 5-dehydroepisterol into ergosta-5,7,22,24(28)-tetraen-3beta-ol by forming the C-22(23) double bond in the sterol side chain. Finally, ergosta-5,7,22,24(28)-tetraen-3beta-ol is substrate of the C-24(28) sterol reductase ERG4 to produce ergosterol. This chain is 3-keto-steroid reductase ERG27, found in Gibberella zeae (strain ATCC MYA-4620 / CBS 123657 / FGSC 9075 / NRRL 31084 / PH-1) (Wheat head blight fungus).